The chain runs to 226 residues: ATP synthase F(0) complex subunit a (226 aa).

Helical transmembrane passes span 11-31 (APSM…SILF), 68-88 (WALM…LGLL), 97-117 (QLSM…ITGF), 138-158 (IPML…ALAV), 164-184 (ITAG…LINI), and 189-209 (AFIT…VALI).

This sequence belongs to the ATPase A chain family. In terms of assembly, component of the ATP synthase complex composed at least of ATP5F1A/subunit alpha, ATP5F1B/subunit beta, ATP5MC1/subunit c (homooctomer), MT-ATP6/subunit a, MT-ATP8/subunit 8, ATP5ME/subunit e, ATP5MF/subunit f, ATP5MG/subunit g, ATP5MK/subunit k, ATP5MJ/subunit j, ATP5F1C/subunit gamma, ATP5F1D/subunit delta, ATP5F1E/subunit epsilon, ATP5PF/subunit F6, ATP5PB/subunit b, ATP5PD/subunit d, ATP5PO/subunit OSCP. ATP synthase complex consists of a soluble F(1) head domain (subunits alpha(3) and beta(3)) - the catalytic core - and a membrane F(0) domain - the membrane proton channel (subunits c, a, 8, e, f, g, k and j). These two domains are linked by a central stalk (subunits gamma, delta, and epsilon) rotating inside the F1 region and a stationary peripheral stalk (subunits F6, b, d, and OSCP). Interacts with DNAJC30; interaction is direct.

Its subcellular location is the mitochondrion inner membrane. The catalysed reaction is H(+)(in) = H(+)(out). Its function is as follows. Subunit a, of the mitochondrial membrane ATP synthase complex (F(1)F(0) ATP synthase or Complex V) that produces ATP from ADP in the presence of a proton gradient across the membrane which is generated by electron transport complexes of the respiratory chain. ATP synthase complex consist of a soluble F(1) head domain - the catalytic core - and a membrane F(1) domain - the membrane proton channel. These two domains are linked by a central stalk rotating inside the F(1) region and a stationary peripheral stalk. During catalysis, ATP synthesis in the catalytic domain of F(1) is coupled via a rotary mechanism of the central stalk subunits to proton translocation. With the subunit c (ATP5MC1), forms the proton-conducting channel in the F(0) domain, that contains two crucial half-channels (inlet and outlet) that facilitate proton movement from the mitochondrial intermembrane space (IMS) into the matrix. Protons are taken up via the inlet half-channel and released through the outlet half-channel, following a Grotthuss mechanism. The polypeptide is ATP synthase F(0) complex subunit a (Canis lupus familiaris (Dog)).